Here is a 97-residue protein sequence, read N- to C-terminus: Small cell adhesion glycoprotein (97 aa).

Over 1 to 36 (MTSFPTTPPPAEELMATTILQATEALSPEAEASTAL) the chain is Extracellular. Residue T2 is glycosylated (O-linked (GalNAc...) threonine). Residue S3 is glycosylated (O-linked (GalNAc...) serine). O-linked (GalNAc...) threonine glycans are attached at residues T6, T7, T17, T18, and T23. The chain crosses the membrane as a helical; Signal-anchor for type III membrane protein span at residues 37-57 (IAVVITVVFLTLLSVVILIFF). Residues 58 to 97 (YLYKNKGSYVTYEPADGEPGAVVLMENDSAKGREKEEYFI) are Cytoplasmic-facing.

It belongs to the SMAGP family. Post-translationally, O-glycosylated. The O-glycan is modified with sialic acid residues.

The protein resides in the cell membrane. The protein localises to the cytoplasmic vesicle membrane. May play a role in epithelial cell-cell contacts. May play a role in tumor invasiveness and metastasis formation. This chain is Small cell adhesion glycoprotein (SMAGP), found in Bos taurus (Bovine).